Consider the following 3117-residue polypeptide: Centrosome-associated protein 350 (3117 aa).

The disordered stretch occupies residues methionine 1–glutamine 24. Residues proline 14 to glutamine 24 are compositionally biased toward polar residues. A phosphoserine mark is found at serine 86, serine 139, serine 142, and serine 218. 4 disordered regions span residues proline 249–arginine 275, isoleucine 436–glutamate 514, threonine 548–lysine 625, and leucine 671–proline 722. Over residues threonine 255–serine 267 the composition is skewed to low complexity. The span at glycine 469–isoleucine 501 shows a compositional bias: basic and acidic residues. Residues serine 473 and serine 507 each carry the phosphoserine modification. Over residues proline 563–proline 573 the composition is skewed to basic residues. Basic and acidic residues-rich tracts occupy residues tyrosine 591–lysine 625 and glutamate 694–glutamate 703. A coiled-coil region spans residues glutamine 598–asparagine 645. The residue at position 695 (serine 695) is a Phosphoserine. Residues proline 705–glutamate 718 are compositionally biased toward low complexity. Threonine 878 carries the phosphothreonine modification. A Phosphoserine modification is found at serine 939. The span at serine 981–serine 992 shows a compositional bias: low complexity. The segment at serine 981–glycine 1002 is disordered. Serine 1061 bears the Phosphoserine mark. The segment at glutamate 1081–aspartate 1298 is disordered. Polar residues predominate over residues glycine 1087–serine 1102. The span at glutamine 1135 to alanine 1144 shows a compositional bias: basic and acidic residues. Low complexity-rich tracts occupy residues threonine 1153–serine 1172 and glutamine 1251–glutamine 1267. Phosphothreonine is present on threonine 1253. 2 positions are modified to phosphoserine: serine 1256 and serine 1259. The span at glycine 1272–methionine 1283 shows a compositional bias: polar residues. Residues isoleucine 1369–glutamate 1411 adopt a coiled-coil conformation. Disordered regions lie at residues threonine 1494–aspartate 1674 and lysine 1794–aspartate 1854. Polar residues predominate over residues proline 1503–glutamate 1512. Low complexity-rich tracts occupy residues tyrosine 1522–tyrosine 1535 and serine 1543–serine 1556. Positions lysine 1558–serine 1571 are enriched in basic and acidic residues. Serine 1613 carries the phosphoserine modification. The segment covering glutamate 1631–aspartate 1647 has biased composition (basic and acidic residues). Phosphoserine is present on residues serine 1648 and serine 1653. Residues lysine 1707–glutamate 1800 adopt a coiled-coil conformation. Residues lysine 1794–lysine 1815 are compositionally biased toward basic and acidic residues. A Phosphoserine modification is found at serine 1818. Residues arginine 1827–serine 1841 show a composition bias toward low complexity. A coiled-coil region spans residues lysine 1856–alanine 1899. The span at glutamate 1903 to alanine 1925 shows a compositional bias: basic and acidic residues. Disordered regions lie at residues glutamate 1903 to leucine 2020, glutamate 2107 to aspartate 2221, leucine 2329 to threonine 2356, and lysine 2407 to asparagine 2432. Serine 1936 is subject to Phosphoserine. Positions glutamate 1983–glutamine 2005 are enriched in polar residues. Residues glutamate 2051–glutamine 2110 are a coiled coil. The span at aspartate 2111 to serine 2129 shows a compositional bias: polar residues. Serine 2115 is modified (phosphoserine). Residues histidine 2141–aspartate 2170 are compositionally biased toward basic and acidic residues. Over residues leucine 2173–serine 2184 the composition is skewed to polar residues. The segment covering arginine 2191 to aspartate 2201 has biased composition (basic and acidic residues). Threonine 2204 is subject to Phosphothreonine. Serine 2206 bears the Phosphoserine mark. Composition is skewed to basic and acidic residues over residues leucine 2329–methionine 2338 and lysine 2407–glutamine 2417. The segment covering methionine 2419–asparagine 2432 has biased composition (polar residues). Serine 2431 and serine 2460 each carry phosphoserine. The segment covering methionine 2465–glutamine 2478 has biased composition (basic and acidic residues). A disordered region spans residues methionine 2465–leucine 2485. Residues glycine 2517–proline 2559 enclose the CAP-Gly domain. Threonine 2689 is modified (phosphothreonine). Positions leucine 2719–serine 2752 form a coiled coil. Phosphoserine is present on residues serine 2830 and serine 2839.

In terms of assembly, part of a ternary complex that contains CEP350, CEP43 and MAPRE1. Interacts (via C-terminus) directly with CEP43 (via N-terminus). Interacts with NR1H3, PPARA, PPARD and PPARG. Interacts directly with microtubules. Interacts with the fusion protein CEP43-FGFR1, and by doing so recruits and activates PI3K and PLC-gamma. Interacts with CYLD. Interacts with CFAP157. Interacts with CEP19 (via C-terminus). Interacts with CEP78; promoting CEP78 localization to centrosome and centriole. In terms of processing, phosphorylated during mitosis. In terms of tissue distribution, detected in heart, brain, skeletal muscle, testis, placenta, lung, liver, kidney and pancreas.

Its subcellular location is the cytoplasm. It is found in the cytoskeleton. It localises to the microtubule organizing center. The protein localises to the centrosome. The protein resides in the spindle. Its subcellular location is the nucleus. It is found in the centriole. It localises to the cilium basal body. Functionally, plays an essential role in centriole growth by stabilizing a procentriolar seed composed of at least, SASS6 and CPAP. Required for anchoring microtubules to the centrosomes and for the integrity of the microtubule network. Recruits PPARA to discrete subcellular compartments and thereby modulates PPARA activity. Required for ciliation. This chain is Centrosome-associated protein 350, found in Homo sapiens (Human).